The following is a 319-amino-acid chain: Large ribosomal subunit protein uL10 (319 aa).

Positions 289–319 (EQKSAAPAAKEEAPKEDSEESDEDMGFGLFD) are disordered.

Belongs to the universal ribosomal protein uL10 family. P0 forms a pentameric complex by interaction with dimers of P1 and P2. Phosphorylated.

Its subcellular location is the nucleus. It localises to the cytoplasm. Ribosomal protein P0 is the functional equivalent of E.coli protein L10. The chain is Large ribosomal subunit protein uL10 (rplp0) from Danio rerio (Zebrafish).